Consider the following 614-residue polypeptide: Zinc finger protein 276 (614 aa).

Residues 1 to 50 (MKRDRLGRFLSPGSSRQCGASDGGGGVSRTRGRPSLSGGPRVDGATARRA) form a disordered region. In terms of domain architecture, ZAD spans 77–163 (GHCRLCHGKF…LQRVNASPAG (87 aa)). 4 residues coordinate Zn(2+): Cys-79, Cys-82, Cys-136, and Cys-139. Positions 268-420 (APRLPQHRGW…KKPGPKPGWK (153 aa)) are disordered. A compositionally biased stretch (acidic residues) spans 357 to 369 (SDLSEGDVLSEDE). Basic and acidic residues predominate over residues 386 to 408 (YPERKVSGKKSESKEAKKSEEPR). The span at 409-420 (IRKKPGPKPGWK) shows a compositional bias: basic residues. C2H2-type zinc fingers lie at residues 434–458 (YKCP…IKEH), 465–490 (RPCP…KLIH), 496–518 (YICD…QMRH), 524–546 (LQCE…MTKH), and 554–577 (FACD…SMVH). Residues 583–614 (QDKALPLEAEPPPGPPSPSVTTEGQAVKPEPT) are disordered. Over residues 591–600 (AEPPPGPPSP) the composition is skewed to pro residues.

Its subcellular location is the nucleus. The protein localises to the chromosome. It is found in the centromere. The protein resides in the kinetochore. May be involved in transcriptional regulation. In Homo sapiens (Human), this protein is Zinc finger protein 276 (ZNF276).